We begin with the raw amino-acid sequence, 317 residues long: MYDWLNALPKAELHLHLEGSLEPELLFALAERNKIALPWNDVETLRKAYAFNNLQEFLDLYYRGADALRTEQDFYDLTWAYLLRCKEQNVIHTEPFFDPQTHTDRGIPFEVVLAGITGALKDGKSKLGVDSGLILSFLRHLSQEEAEKTLDQALPFRDAFVAVGLDSSEMGHPPSKFQRVFDRARSEGFLTVAHAGEEGPPEYIWEALDLLKIQRIDHGVRAIEDERLMQRIIDEQIPLTVCPLSNTKLCVFDDMAQHNILDMLERGVKVTVNSDDPAYFGGYVTENFHALYTHLGMTEDQAKRLAQNSLDARLVKP.

Zn(2+) contacts are provided by His-14, His-16, and His-194. The Proton donor role is filled by Glu-197. Asp-275 contributes to the Zn(2+) binding site. Residue Asp-276 coordinates substrate.

This sequence belongs to the metallo-dependent hydrolases superfamily. Adenosine and AMP deaminases family. Adenine deaminase type 2 subfamily. It depends on Zn(2+) as a cofactor.

The enzyme catalyses adenine + H2O + H(+) = hypoxanthine + NH4(+). Functionally, catalyzes the hydrolytic deamination of adenine to hypoxanthine. Plays an important role in the purine salvage pathway and in nitrogen catabolism. In Pseudomonas savastanoi pv. phaseolicola (strain 1448A / Race 6) (Pseudomonas syringae pv. phaseolicola (strain 1448A / Race 6)), this protein is Adenine deaminase.